The chain runs to 202 residues: Holliday junction branch migration complex subunit RuvA (202 aa).

A domain I region spans residues 1 to 64 (MIDFLKGRLV…ETALEMFGFS (64 aa)). Residues 65-143 (SELDRTAFLL…KQQVAVSAEL (79 aa)) are domain II. The flexible linker stretch occupies residues 144-152 (PASDGVPVL). Residues 152-202 (LAGRAENEALAALISLGYTPREAREALNRLPDRKLDAAGLVHAALRIMGSQ) form a domain III region.

The protein belongs to the RuvA family. In terms of assembly, homotetramer. Forms an RuvA(8)-RuvB(12)-Holliday junction (HJ) complex. HJ DNA is sandwiched between 2 RuvA tetramers; dsDNA enters through RuvA and exits via RuvB. An RuvB hexamer assembles on each DNA strand where it exits the tetramer. Each RuvB hexamer is contacted by two RuvA subunits (via domain III) on 2 adjacent RuvB subunits; this complex drives branch migration. In the full resolvosome a probable DNA-RuvA(4)-RuvB(12)-RuvC(2) complex forms which resolves the HJ.

It localises to the cytoplasm. Its function is as follows. The RuvA-RuvB-RuvC complex processes Holliday junction (HJ) DNA during genetic recombination and DNA repair, while the RuvA-RuvB complex plays an important role in the rescue of blocked DNA replication forks via replication fork reversal (RFR). RuvA specifically binds to HJ cruciform DNA, conferring on it an open structure. The RuvB hexamer acts as an ATP-dependent pump, pulling dsDNA into and through the RuvAB complex. HJ branch migration allows RuvC to scan DNA until it finds its consensus sequence, where it cleaves and resolves the cruciform DNA. The polypeptide is Holliday junction branch migration complex subunit RuvA (Desulforudis audaxviator (strain MP104C)).